A 469-amino-acid polypeptide reads, in one-letter code: Glutamine synthetase (469 aa).

One can recognise a GS beta-grasp domain in the interval 13 to 97; that stretch reads HEVKFVDLRF…IRCDILEPGT (85 aa). In terms of domain architecture, GS catalytic spans 105 to 469; the sequence is PRSIAKRAED…PVEFELYYSV (365 aa). Mg(2+)-binding residues include Glu130 and Glu132. Glu208 provides a ligand contact to ATP. Mg(2+)-binding residues include Glu213 and Glu221. L-glutamate-binding positions include 265–266 and Gly266; that span reads NG. Residue His270 coordinates Mg(2+). ATP is bound by residues 272 to 274 and Ser274; that span reads HMS. Arg322, Glu328, and Arg340 together coordinate L-glutamate. ATP contacts are provided by Arg340, Arg345, and Lys353. Mg(2+) is bound at residue Glu358. Residue Arg360 coordinates L-glutamate. Residue Tyr398 is modified to O-AMP-tyrosine.

It belongs to the glutamine synthetase family. Oligomer of 12 subunits arranged in the form of two hexameric ring. Requires Mg(2+) as cofactor.

It is found in the cytoplasm. The enzyme catalyses L-glutamate + NH4(+) + ATP = L-glutamine + ADP + phosphate + H(+). The activity of this enzyme could be controlled by adenylation under conditions of abundant glutamine. Catalyzes the ATP-dependent biosynthesis of glutamine from glutamate and ammonia. The protein is Glutamine synthetase of Escherichia coli O157:H7.